The primary structure comprises 383 residues: 3-phytase (383 aa).

An N-terminal signal peptide occupies residues 1–26 (MNHSKTLLLTAAAGLMLTCGAVSSQA). Positions 27-29 (KHK) are excised as a propeptide. The BPP domain maps to 30–362 (LSDPYHFTVN…VPWERIADQI (333 aa)).

The cofactor is Ca(2+).

Its subcellular location is the secreted. The enzyme catalyses 1D-myo-inositol hexakisphosphate + H2O = 1D-myo-inositol 1,2,4,5,6-pentakisphosphate + phosphate. Functionally, catalyzes the hydrolysis of inorganic orthophosphate from phytate. Only phytate, ADP, and ATP were hydrolyzed (100, 75, and 50% of the relative activity, respectively). The chain is 3-phytase (phyC) from Bacillus subtilis.